Here is a 238-residue protein sequence, read N- to C-terminus: MQLPNLQSATLLRRYKRFLADVELNNGEILTLHCANTGAMTGCGEKGDTVWFSTSDSKTRKYPHSWELTQLKNGQTVCINTHRSNQLTLEALQNKIITELAEYDEILPEVKYGVENSRIDFLLKGKNLPDCYVEVKSVTFVKNHLGLFPDAVTTRGQKHLRELIAMKKRGHRAVVFFAGLHDGFNRFTVAKSIDPDYAELLQQAVKEGVEVYSYAVKFDFSHQKPTALYLTNLVSYLE.

The protein belongs to the SfsA family.

In Histophilus somni (strain 2336) (Haemophilus somnus), this protein is Sugar fermentation stimulation protein homolog.